Reading from the N-terminus, the 180-residue chain is Large ribosomal subunit protein uL6 (180 aa).

The protein belongs to the universal ribosomal protein uL6 family. Part of the 50S ribosomal subunit.

Functionally, this protein binds to the 23S rRNA, and is important in its secondary structure. It is located near the subunit interface in the base of the L7/L12 stalk, and near the tRNA binding site of the peptidyltransferase center. In Borrelia turicatae (strain 91E135), this protein is Large ribosomal subunit protein uL6.